The following is a 157-amino-acid chain: SsrA-binding protein (157 aa).

Residues 131-157 (KQLHDKRESVKQRDWQRDKARLMRDKG) are disordered. Residues 132–157 (QLHDKRESVKQRDWQRDKARLMRDKG) are compositionally biased toward basic and acidic residues.

It belongs to the SmpB family.

Its subcellular location is the cytoplasm. Its function is as follows. Required for rescue of stalled ribosomes mediated by trans-translation. Binds to transfer-messenger RNA (tmRNA), required for stable association of tmRNA with ribosomes. tmRNA and SmpB together mimic tRNA shape, replacing the anticodon stem-loop with SmpB. tmRNA is encoded by the ssrA gene; the 2 termini fold to resemble tRNA(Ala) and it encodes a 'tag peptide', a short internal open reading frame. During trans-translation Ala-aminoacylated tmRNA acts like a tRNA, entering the A-site of stalled ribosomes, displacing the stalled mRNA. The ribosome then switches to translate the ORF on the tmRNA; the nascent peptide is terminated with the 'tag peptide' encoded by the tmRNA and targeted for degradation. The ribosome is freed to recommence translation, which seems to be the essential function of trans-translation. The sequence is that of SsrA-binding protein from Methylorubrum populi (strain ATCC BAA-705 / NCIMB 13946 / BJ001) (Methylobacterium populi).